The following is a 463-amino-acid chain: Soluble pyridine nucleotide transhydrogenase (463 aa).

Residue 35-44 participates in FAD binding; the sequence is EKQQAVGGNC.

Belongs to the class-I pyridine nucleotide-disulfide oxidoreductase family. The cofactor is FAD.

It is found in the cytoplasm. It carries out the reaction NAD(+) + NADPH = NADH + NADP(+). In terms of biological role, conversion of NADPH, generated by peripheral catabolic pathways, to NADH, which can enter the respiratory chain for energy generation. This Chromohalobacter salexigens (strain ATCC BAA-138 / DSM 3043 / CIP 106854 / NCIMB 13768 / 1H11) protein is Soluble pyridine nucleotide transhydrogenase.